The chain runs to 89 residues: Small ribosomal subunit protein uS15 (89 aa).

The protein belongs to the universal ribosomal protein uS15 family. As to quaternary structure, part of the 30S ribosomal subunit. Forms a bridge to the 50S subunit in the 70S ribosome, contacting the 23S rRNA.

In terms of biological role, one of the primary rRNA binding proteins, it binds directly to 16S rRNA where it helps nucleate assembly of the platform of the 30S subunit by binding and bridging several RNA helices of the 16S rRNA. Functionally, forms an intersubunit bridge (bridge B4) with the 23S rRNA of the 50S subunit in the ribosome. The chain is Small ribosomal subunit protein uS15 from Chlamydia abortus (strain DSM 27085 / S26/3) (Chlamydophila abortus).